The following is a 392-amino-acid chain: Formate-dependent phosphoribosylglycinamide formyltransferase (392 aa).

Residues 22–23 (EL) and E82 each bind N(1)-(5-phospho-beta-D-ribosyl)glycinamide. ATP is bound by residues R114, K155, 160-165 (SSGKGQ), 195-198 (EGVV), and E203. The ATP-grasp domain maps to 119-308 (RLAAEELGLP…EFALHVRAFL (190 aa)). E267 and E279 together coordinate Mg(2+). Residues D286, K355, and 362–363 (RR) contribute to the N(1)-(5-phospho-beta-D-ribosyl)glycinamide site.

The protein belongs to the PurK/PurT family. In terms of assembly, homodimer.

It carries out the reaction N(1)-(5-phospho-beta-D-ribosyl)glycinamide + formate + ATP = N(2)-formyl-N(1)-(5-phospho-beta-D-ribosyl)glycinamide + ADP + phosphate + H(+). It participates in purine metabolism; IMP biosynthesis via de novo pathway; N(2)-formyl-N(1)-(5-phospho-D-ribosyl)glycinamide from N(1)-(5-phospho-D-ribosyl)glycinamide (formate route): step 1/1. In terms of biological role, involved in the de novo purine biosynthesis. Catalyzes the transfer of formate to 5-phospho-ribosyl-glycinamide (GAR), producing 5-phospho-ribosyl-N-formylglycinamide (FGAR). Formate is provided by PurU via hydrolysis of 10-formyl-tetrahydrofolate. The sequence is that of Formate-dependent phosphoribosylglycinamide formyltransferase from Salmonella paratyphi B (strain ATCC BAA-1250 / SPB7).